A 208-amino-acid chain; its full sequence is MARYRGPVEKLERRFGVSLALKGERRLAGKSALDKRPYAPGQHGARKGKISEYGLQLREKQKAKFMYGVSEKQFRRLFAEAARREGNTGVLLIQLLEQRLDNVVYRMGFATTRRFARQLVTHGHILVNGKRVDIPSFRVEAGAKIEIIEKSKNNPQITRAIELTAQTGIVAWVDVEKDKRFGIFTRKPEREEVVIPVEERFIVELYSK.

The S4 RNA-binding domain occupies 98–163 (QRLDNVVYRM…NPQITRAIEL (66 aa)).

It belongs to the universal ribosomal protein uS4 family. Part of the 30S ribosomal subunit. Contacts protein S5. The interaction surface between S4 and S5 is involved in control of translational fidelity.

Functionally, one of the primary rRNA binding proteins, it binds directly to 16S rRNA where it nucleates assembly of the body of the 30S subunit. With S5 and S12 plays an important role in translational accuracy. The sequence is that of Small ribosomal subunit protein uS4 from Campylobacter jejuni (strain RM1221).